A 680-amino-acid polypeptide reads, in one-letter code: UvrABC system protein C (680 aa).

One can recognise a GIY-YIG domain in the interval 66–144; sequence NSPGVYRMFN…IKRLRPRFNV (79 aa). Positions 254–289 constitute a UVR domain; it reads QKVKSHMAEAMNQAAEDLDFERAAIYRDRLAALSHV.

Belongs to the UvrC family. Interacts with UvrB in an incision complex.

It is found in the cytoplasm. Its function is as follows. The UvrABC repair system catalyzes the recognition and processing of DNA lesions. UvrC both incises the 5' and 3' sides of the lesion. The N-terminal half is responsible for the 3' incision and the C-terminal half is responsible for the 5' incision. This chain is UvrABC system protein C, found in Rhizobium johnstonii (strain DSM 114642 / LMG 32736 / 3841) (Rhizobium leguminosarum bv. viciae).